We begin with the raw amino-acid sequence, 417 residues long: UDP-N-acetylglucosamine 1-carboxyvinyltransferase (417 aa).

22–23 (KN) serves as a coordination point for phosphoenolpyruvate. R92 provides a ligand contact to UDP-N-acetyl-alpha-D-glucosamine. The active-site Proton donor is the C116. Position 116 is a 2-(S-cysteinyl)pyruvic acid O-phosphothioketal (C116). Residues 121–125 (RPIDL), D306, and I328 contribute to the UDP-N-acetyl-alpha-D-glucosamine site.

The protein belongs to the EPSP synthase family. MurA subfamily.

It localises to the cytoplasm. It carries out the reaction phosphoenolpyruvate + UDP-N-acetyl-alpha-D-glucosamine = UDP-N-acetyl-3-O-(1-carboxyvinyl)-alpha-D-glucosamine + phosphate. It functions in the pathway cell wall biogenesis; peptidoglycan biosynthesis. Cell wall formation. Adds enolpyruvyl to UDP-N-acetylglucosamine. This is UDP-N-acetylglucosamine 1-carboxyvinyltransferase from Buchnera aphidicola subsp. Schizaphis graminum (strain Sg).